The following is a 558-amino-acid chain: REST corepressor spr-1 (558 aa).

A disordered region spans residues 1–106 (MDLYDDDGES…KVKGPLSNTN (106 aa)). Positions 36–56 (TIEENVPEVEENTLLEEDSLV) are enriched in acidic residues. Basic residues predominate over residues 69–80 (KPSKSKRKRKRS). The ELM2 domain maps to 107–192 (KEINVGTEFQ…SAIAEVARRN (86 aa)). Positions 193–244 (ELKDVWTDQEITLFENCYQIFGKNFSQIRSALCHRSLQSIVQFYYESKKRVK) constitute an SANT 1 domain. The GATA-type zinc-finger motif lies at 271–325 (AIFESMCDNCGEKAENMQINNAMNRPECRACLIYFNQTGVPRPTSLRLVLAERIR). Residues 378 to 402 (CTENGNVGETSSPSAQKTEIQSESD) are compositionally biased toward polar residues. A disordered region spans residues 378–406 (CTENGNVGETSSPSAQKTEIQSESDGSGP). The region spanning 481 to 532 (HYSQDWTQLERSQVIRCFNMYGAHFEHIADVIGTKTPDQVYQFYLENQKAID) is the SANT 2 domain.

This sequence belongs to the CoREST family. In terms of assembly, probably part of a large repressor complex. Interacts with histone demethylase spr-5/lsd-1.

The protein localises to the nucleus. In terms of biological role, probable corepressor protein, which probably participates in the transcriptional repression of the presenilin protein hop-1. Probably acts via the formation of a multiprotein complex that deacetylates and demethylates specific sites on histones. Acts redundantly with the transcriptional repressor lin-35 to play a role in vulval morphogenesis and promote germline proliferation. This chain is REST corepressor spr-1, found in Caenorhabditis elegans.